The chain runs to 254 residues: Molybdate-binding protein ModA (254 aa).

An N-terminal signal peptide occupies residues 1-24 (MKKLTKISTALLIAGLGFSFAASA). Positions 33, 61, 146, 173, and 191 each coordinate molybdate.

This sequence belongs to the bacterial solute-binding protein ModA family. In terms of assembly, the complex is composed of two ATP-binding proteins (ModC), two transmembrane proteins (ModB) and a solute-binding protein (ModA).

Its subcellular location is the periplasm. Involved in the transport of molybdenum into the cell. The chain is Molybdate-binding protein ModA (modA) from Haemophilus influenzae (strain ATCC 51907 / DSM 11121 / KW20 / Rd).